The sequence spans 408 residues: Cobalt-precorrin-5B C(1)-methyltransferase (408 aa).

It belongs to the CbiD family.

The enzyme catalyses Co-precorrin-5B + S-adenosyl-L-methionine = Co-precorrin-6A + S-adenosyl-L-homocysteine. It participates in cofactor biosynthesis; adenosylcobalamin biosynthesis; cob(II)yrinate a,c-diamide from sirohydrochlorin (anaerobic route): step 6/10. Catalyzes the methylation of C-1 in cobalt-precorrin-5B to form cobalt-precorrin-6A. In Clostridioides difficile (strain 630) (Peptoclostridium difficile), this protein is Cobalt-precorrin-5B C(1)-methyltransferase.